We begin with the raw amino-acid sequence, 312 residues long: Glycine--tRNA ligase alpha subunit (312 aa).

Belongs to the class-II aminoacyl-tRNA synthetase family. Tetramer of two alpha and two beta subunits.

The protein localises to the cytoplasm. It carries out the reaction tRNA(Gly) + glycine + ATP = glycyl-tRNA(Gly) + AMP + diphosphate. The protein is Glycine--tRNA ligase alpha subunit of Methylobacillus flagellatus (strain ATCC 51484 / DSM 6875 / VKM B-1610 / KT).